The primary structure comprises 1348 residues: ABC multidrug transporter atrD (1348 aa).

Over residues 1–10 (MSPLETNPLS) the composition is skewed to polar residues. Residues 1–67 (MSPLETNPLS…HRPKSSSSNN (67 aa)) form a disordered region. Over residues 20–31 (ETSTTEEQASTP) the composition is skewed to low complexity. Asn-99 carries an N-linked (GlcNAc...) asparagine glycan. Transmembrane regions (helical) follow at residues 114–134 (ILIM…LPLF), 168–188 (YFVY…VGFI), 240–260 (KVGL…IAYV), and 268–288 (ICSS…QFII). The 291-residue stretch at 118-408 (VISTICAIAA…VSPNAQAFTN (291 aa)) folds into the ABC transmembrane type-1 1 domain. Asn-314 carries an N-linked (GlcNAc...) asparagine glycan. 2 helical membrane-spanning segments follow: residues 344-364 (IVMG…YGLG) and 371-391 (FLVD…AILI). The ABC transporter 1 domain occupies 443 to 688 (IELRNVKHIY…GGAYRKLVEA (246 aa)). Position 478–485 (478–485 (GPSGSGKS)) interacts with ATP. Asn-550 carries N-linked (GlcNAc...) asparagine glycosylation. Helical transmembrane passes span 778–798 (MLIG…QAVL) and 825–845 (LMFF…GAAF). The ABC transmembrane type-1 2 domain occupies 779-1068 (LIGLVFSVLA…VFSFAPDMGK (290 aa)). The N-linked (GlcNAc...) asparagine glycan is linked to Asn-877. 4 helical membrane passes run 892–912 (HLSG…TTLG), 925–947 (LALV…FYML), 1015–1035 (ALVF…LGHH), and 1042–1062 (FFVC…VFSF). The N-linked (GlcNAc...) asparagine glycan is linked to Asn-1088. The region spanning 1103-1341 (IEFRNVHFRY…KGRYYELVNL (239 aa)) is the ABC transporter 2 domain. Residue 1138–1145 (GPSGCGKS) participates in ATP binding.

It belongs to the ABC transporter superfamily. ABCB family. Multidrug resistance exporter (TC 3.A.1.201) subfamily.

It localises to the cell membrane. Its activity is regulated as follows. Fenamirol efflux transporter activity is inhibited by the cyclosporin derivative PSC 833, nigericin, reserpine and valinomycin. The effect of reserpine is transiant, while that of the cyclosporin derivative PSC 833, nigericin and valinomycin is proportional to the time of exposure. Cyclohexinmide has inhibitory effect only when applied prior to addition of the fungicide. In terms of biological role, pleiotropic ABC efflux transporter involved in the protection of the cells against a wide range of toxic compounds. Confers resistance to the azole fenarimol via efflux transport. May also be involved in the secretion of penicillin. This Emericella nidulans (Aspergillus nidulans) protein is ABC multidrug transporter atrD.